Here is a 106-residue protein sequence, read N- to C-terminus: Nucleoid-associated protein Smlt1015 (106 aa).

The interval 81–106 (IDAESKSKMGSATAGMQLPPGMKLPF) is disordered.

This sequence belongs to the YbaB/EbfC family. As to quaternary structure, homodimer.

Its subcellular location is the cytoplasm. The protein resides in the nucleoid. Binds to DNA and alters its conformation. May be involved in regulation of gene expression, nucleoid organization and DNA protection. The polypeptide is Nucleoid-associated protein Smlt1015 (Stenotrophomonas maltophilia (strain K279a)).